A 344-amino-acid polypeptide reads, in one-letter code: Oxygen sensor histidine kinase NreB (344 aa).

Positions 58, 61, 73, and 76 each coordinate [4Fe-4S] cluster. The Histidine kinase domain occupies glutamate 147–isoleucine 344. At histidine 158 the chain carries Phosphohistidine; by autocatalysis.

Requires [4Fe-4S] cluster as cofactor. Autophosphorylated.

It is found in the cytoplasm. The enzyme catalyses ATP + protein L-histidine = ADP + protein N-phospho-L-histidine.. Member of the two-component regulatory system NreB/NreC involved in the control of dissimilatory nitrate/nitrite reduction in response to oxygen. NreB functions as a direct oxygen sensor histidine kinase which is autophosphorylated, in the absence of oxygen, probably at the conserved histidine residue, and transfers its phosphate group probably to a conserved aspartate residue of NreC. NreB/NreC activates the expression of the nitrate (narGHJI) and nitrite (nir) reductase operons, as well as the putative nitrate transporter gene narT. This Staphylococcus epidermidis (strain ATCC 35984 / DSM 28319 / BCRC 17069 / CCUG 31568 / BM 3577 / RP62A) protein is Oxygen sensor histidine kinase NreB (nreB).